Here is a 189-residue protein sequence, read N- to C-terminus: Lipid A acyltransferase PagP (189 aa).

A signal peptide spans 1 to 23; sequence MRLKLILYFLILSCYLGIGSARA. Active-site residues include H61, D104, and S105.

It belongs to the lipid A palmitoyltransferase family. As to quaternary structure, homodimer.

It localises to the cell outer membrane. It catalyses the reaction a lipid A + a 1,2-diacyl-sn-glycero-3-phosphocholine = a hepta-acyl lipid A + a 2-acyl-sn-glycero-3-phosphocholine. The enzyme catalyses a lipid IVA + a 1,2-diacyl-sn-glycero-3-phosphocholine = a lipid IVB + a 2-acyl-sn-glycero-3-phosphocholine. It carries out the reaction a lipid IIA + a 1,2-diacyl-sn-glycero-3-phosphocholine = a lipid IIB + a 2-acyl-sn-glycero-3-phosphocholine. In terms of biological role, transfers a fatty acid residue from the sn-1 position of a phospholipid to the N-linked hydroxyfatty acid chain on the proximal unit of lipid A or its precursors. In Erwinia tasmaniensis (strain DSM 17950 / CFBP 7177 / CIP 109463 / NCPPB 4357 / Et1/99), this protein is Lipid A acyltransferase PagP.